We begin with the raw amino-acid sequence, 92 residues long: MEIKSDNPDHGFQFPGQFELSAMGPANRGLEHELPRLLLAAGIDVVNERISWKHSSNGKYVSVRIVFKAESREQYDLAHQALRDHPEVKWTL.

The protein belongs to the UPF0250 family.

In Stenotrophomonas maltophilia (strain K279a), this protein is UPF0250 protein Smlt4048.